The following is a 291-amino-acid chain: Inositol-1-monophosphatase (291 aa).

Mg(2+) is bound by residues Glu-83, Asp-104, Ile-106, and Asp-107. Substrate is bound at residue Glu-83. Substrate is bound by residues 106-109, Arg-206, and Asp-235; that span reads IDGT. Asp-235 is a binding site for Mg(2+).

The protein belongs to the inositol monophosphatase superfamily. Requires Mg(2+) as cofactor.

The enzyme catalyses a myo-inositol phosphate + H2O = myo-inositol + phosphate. The sequence is that of Inositol-1-monophosphatase (suhB) from Mycobacterium leprae (strain TN).